A 208-amino-acid chain; its full sequence is Large ribosomal subunit protein bL25 (208 aa).

It belongs to the bacterial ribosomal protein bL25 family. CTC subfamily. As to quaternary structure, part of the 50S ribosomal subunit; part of the 5S rRNA/L5/L18/L25 subcomplex. Contacts the 5S rRNA. Binds to the 5S rRNA independently of L5 and L18.

In terms of biological role, this is one of the proteins that binds to the 5S RNA in the ribosome where it forms part of the central protuberance. In Syntrophotalea carbinolica (strain DSM 2380 / NBRC 103641 / GraBd1) (Pelobacter carbinolicus), this protein is Large ribosomal subunit protein bL25.